The sequence spans 414 residues: Probable tRNA pseudouridine synthase D (414 aa).

D90 serves as the catalytic Nucleophile. The region spanning 162-382 (GFPNFFGVQR…SSGDYRIISA (221 aa)) is the TRUD domain.

Belongs to the pseudouridine synthase TruD family.

The catalysed reaction is uridine(13) in tRNA = pseudouridine(13) in tRNA. In terms of biological role, could be responsible for synthesis of pseudouridine from uracil-13 in transfer RNAs. The chain is Probable tRNA pseudouridine synthase D from Picrophilus torridus (strain ATCC 700027 / DSM 9790 / JCM 10055 / NBRC 100828 / KAW 2/3).